The sequence spans 118 residues: Putative pterin-4-alpha-carbinolamine dehydratase (118 aa).

Belongs to the pterin-4-alpha-carbinolamine dehydratase family.

The catalysed reaction is (4aS,6R)-4a-hydroxy-L-erythro-5,6,7,8-tetrahydrobiopterin = (6R)-L-erythro-6,7-dihydrobiopterin + H2O. This Pseudomonas aeruginosa (strain LESB58) protein is Putative pterin-4-alpha-carbinolamine dehydratase.